We begin with the raw amino-acid sequence, 649 residues long: Archaeal Lon protease (649 aa).

At 1-114 (MFSIKFKTTE…KLDFKAPSST (114 aa)) the chain is on the cytoplasmic side. Position 47-54 (47-54 (GDPGVGKS)) interacts with ATP. The chain crosses the membrane as a helical span at residues 115–135 (TLLLIMIGAILLSEYLLKYLP). The Extracellular portion of the chain corresponds to 136-138 (QNY). The chain crosses the membrane as a helical span at residues 139–159 (LLAAVTITALIVLIFGFVIIL). Residues 160-649 (TSIMGASRAS…DNRGGAERFN (490 aa)) lie on the Cytoplasmic side of the membrane. Residues 456-639 (EPKVGVIYGL…DEIVPLVFDL (184 aa)) enclose the Lon proteolytic domain. Active-site residues include serine 550 and lysine 593.

The protein belongs to the peptidase S16 family. Archaeal LonB subfamily. As to quaternary structure, homohexamer. Organized in a ring with a central cavity.

The protein resides in the cell membrane. ATP-dependent serine protease that mediates the selective degradation of mutant and abnormal proteins as well as certain short-lived regulatory proteins. Degrades polypeptides processively. In Methanocaldococcus jannaschii (strain ATCC 43067 / DSM 2661 / JAL-1 / JCM 10045 / NBRC 100440) (Methanococcus jannaschii), this protein is Archaeal Lon protease.